The chain runs to 279 residues: uncharacterized protein (279 aa).

3 helical membrane-spanning segments follow: residues 31 to 51, 67 to 87, and 115 to 135; these read GYIAQALGIADVLAVAYFHAT, LLSIGHYAIALYAALIEAKII, and EITGGSLGHGLGIAVGMSLAL.

Belongs to the transketolase family. Thiamine diphosphate serves as cofactor.

The protein resides in the cell membrane. This is an uncharacterized protein from Sinorhizobium fredii (strain NBRC 101917 / NGR234).